We begin with the raw amino-acid sequence, 177 residues long: Peptide methionine sulfoxide reductase MsrA 2 (177 aa).

Cysteine 12 is a catalytic residue.

The protein belongs to the MsrA Met sulfoxide reductase family.

It carries out the reaction L-methionyl-[protein] + [thioredoxin]-disulfide + H2O = L-methionyl-(S)-S-oxide-[protein] + [thioredoxin]-dithiol. It catalyses the reaction [thioredoxin]-disulfide + L-methionine + H2O = L-methionine (S)-S-oxide + [thioredoxin]-dithiol. In terms of biological role, has an important function as a repair enzyme for proteins that have been inactivated by oxidation. Catalyzes the reversible oxidation-reduction of methionine sulfoxide in proteins to methionine. In Staphylococcus aureus (strain MRSA252), this protein is Peptide methionine sulfoxide reductase MsrA 2.